We begin with the raw amino-acid sequence, 209 residues long: Large ribosomal subunit protein uL3 (209 aa).

This sequence belongs to the universal ribosomal protein uL3 family. As to quaternary structure, part of the 50S ribosomal subunit. Forms a cluster with proteins L14 and L19.

Functionally, one of the primary rRNA binding proteins, it binds directly near the 3'-end of the 23S rRNA, where it nucleates assembly of the 50S subunit. The sequence is that of Large ribosomal subunit protein uL3 from Moorella thermoacetica (strain ATCC 39073 / JCM 9320).